The chain runs to 142 residues: Large ribosomal subunit protein uL11 (142 aa).

It belongs to the universal ribosomal protein uL11 family. Part of the ribosomal stalk of the 50S ribosomal subunit. Interacts with L10 and the large rRNA to form the base of the stalk. L10 forms an elongated spine to which L12 dimers bind in a sequential fashion forming a multimeric L10(L12)X complex. Post-translationally, one or more lysine residues are methylated.

Forms part of the ribosomal stalk which helps the ribosome interact with GTP-bound translation factors. This Cronobacter sakazakii (strain ATCC BAA-894) (Enterobacter sakazakii) protein is Large ribosomal subunit protein uL11.